A 315-amino-acid polypeptide reads, in one-letter code: Transaldolase (315 aa).

Lys131 serves as the catalytic Schiff-base intermediate with substrate.

This sequence belongs to the transaldolase family. Type 1 subfamily. Homodimer.

The protein resides in the cytoplasm. The catalysed reaction is D-sedoheptulose 7-phosphate + D-glyceraldehyde 3-phosphate = D-erythrose 4-phosphate + beta-D-fructose 6-phosphate. It participates in carbohydrate degradation; pentose phosphate pathway; D-glyceraldehyde 3-phosphate and beta-D-fructose 6-phosphate from D-ribose 5-phosphate and D-xylulose 5-phosphate (non-oxidative stage): step 2/3. In terms of biological role, transaldolase is important for the balance of metabolites in the pentose-phosphate pathway. The polypeptide is Transaldolase (Haemophilus ducreyi (strain 35000HP / ATCC 700724)).